Here is a 91-residue protein sequence, read N- to C-terminus: Large ribosomal subunit protein uL22 (91 aa).

It belongs to the universal ribosomal protein uL22 family. Part of the 50S ribosomal subunit.

This protein binds specifically to 23S rRNA; its binding is stimulated by other ribosomal proteins, e.g. L4, L17, and L20. It is important during the early stages of 50S assembly. It makes multiple contacts with different domains of the 23S rRNA in the assembled 50S subunit and ribosome. Functionally, the globular domain of the protein is located near the polypeptide exit tunnel on the outside of the subunit, while an extended beta-hairpin is found that lines the wall of the exit tunnel in the center of the 70S ribosome. In Pigeon pea witches'-broom phytoplasma, this protein is Large ribosomal subunit protein uL22 (rplV).